Consider the following 319-residue polypeptide: Ribose-phosphate pyrophosphokinase (319 aa).

ATP contacts are provided by residues 40 to 42 and 99 to 100; these read DGE and RQ. Mg(2+)-binding residues include His-134 and Asp-174. Residue Lys-198 is part of the active site. D-ribose 5-phosphate contacts are provided by residues Arg-200, Asp-224, and 228–232; that span reads DTAGT.

This sequence belongs to the ribose-phosphate pyrophosphokinase family. Class I subfamily. As to quaternary structure, homohexamer. It depends on Mg(2+) as a cofactor.

It is found in the cytoplasm. It catalyses the reaction D-ribose 5-phosphate + ATP = 5-phospho-alpha-D-ribose 1-diphosphate + AMP + H(+). It functions in the pathway metabolic intermediate biosynthesis; 5-phospho-alpha-D-ribose 1-diphosphate biosynthesis; 5-phospho-alpha-D-ribose 1-diphosphate from D-ribose 5-phosphate (route I): step 1/1. Involved in the biosynthesis of the central metabolite phospho-alpha-D-ribosyl-1-pyrophosphate (PRPP) via the transfer of pyrophosphoryl group from ATP to 1-hydroxyl of ribose-5-phosphate (Rib-5-P). This Xanthomonas axonopodis pv. citri (strain 306) protein is Ribose-phosphate pyrophosphokinase.